The following is a 513-amino-acid chain: Cytochrome P450 94A2 (513 aa).

Residues 7-24 (ISWLLFSTSLFWFLFLAT) traverse the membrane as a helical segment. Heme is bound at residue C455.

Belongs to the cytochrome P450 family. Heme serves as cofactor. In terms of tissue distribution, weakly expressed in seedlings.

The protein resides in the endoplasmic reticulum membrane. Functionally, catalyzes the omega-hydroxylation of various fatty acids (FA). The substrate specificity is higher for myristate &gt; laurate = palmitate (C14&gt;C16=C12). In Vicia sativa (Spring vetch), this protein is Cytochrome P450 94A2 (CYP94A2).